We begin with the raw amino-acid sequence, 1379 residues long: ATPase histone chaperone YTA7 (1379 aa).

2 disordered regions span residues 1–39 (MARN…TTTR) and 54–243 (DFLE…NSRN). Position 2 is an N-acetylalanine (A2). Phosphoserine occurs at positions 11 and 17. Positions 61–78 (VMDKDETPVDVTSDEHHN) are enriched in basic and acidic residues. S94 bears the Phosphoserine mark. Over residues 97–110 (ENARTNEELTNERN) the composition is skewed to basic and acidic residues. 2 stretches are compositionally biased toward acidic residues: residues 119 to 152 (PEED…DEDS) and 170 to 184 (DPDD…DEEG). Residues 192 to 207 (SSKRLKRANSRRTRSS) are compositionally biased toward basic residues. T212 carries the phosphothreonine modification. Residues 218–228 (RALRSRTRHSR) show a composition bias toward basic residues. T229 carries the post-translational modification Phosphothreonine. S241, S259, and S285 each carry phosphoserine. A disordered region spans residues 302 to 330 (NPSPARRGRGGWNASQNSGPTRRLFPTGG). 3 positions are modified to phosphoserine: S367, S369, and S370. The tract at residues 375-396 (LPLGVTPKTKKENTQKKKKKKP) is disordered. The AAA-ATPase; required for its chromatin boundary function stretch occupies residues 450–578 (VLFHGPPGTG…PALRRPGRFD (129 aa)). 454–461 (GPPGTGKT) contributes to the ATP binding site. S735 is subject to Phosphoserine. In terms of domain architecture, Bromo spans 974 to 1101 (RLKNVLKIKL…ANAQMGIEEI (128 aa)). Residue S1142 is modified to Phosphoserine. Disordered regions lie at residues 1233-1274 (TCTS…ANTN) and 1291-1316 (LHET…GKKS). Positions 1244–1254 (ERARKEPKENE) are enriched in basic and acidic residues. S1256 is subject to Phosphoserine. Positions 1256 to 1274 (SLQTQVTEENFSKIDANTN) are enriched in polar residues. Over residues 1293-1316 (ETVEKRERSPIPKEVVEPEQGKKS) the composition is skewed to basic and acidic residues.

Belongs to the AAA ATPase family. As to quaternary structure, interacts with CSE4/CENP-A. Interacts with SCM3. Interacts with SPT16. Interacts with POB3. Interacts with the casein kinase II complex subunits CKA1, CKA2, CKB1 and CKB2. Interacts with RNA polymerase II. Interacts (via Bromo domain) with histone H3. Interacts (via Bromo domain) with histone H4. In terms of processing, phosphorylated by CDK1 and casein kinase II during S-phase, which leads to its eviction from histone gene promoters and promotes histone gene transcription.

Its subcellular location is the chromosome. It localises to the centromere. It is found in the nucleus. In terms of biological role, functions as an ATP-dependent nucleosome disassembly factor that helps evict canonical histone H3 from the 5'-end of genes upon their induction. Also contributes to kinetochore assembly by cooperating with SCM3 to load the histone H3 variant CSE4/CENP-A at centromeres. Provides a chromatin boundary function at the 5'-end of genes that restricts access by RTT106 and thus prevents ectopic spreading of repressive chromatin into coding regions. Also prevents heterochromatin spreading downstream of the silent mating-type locus HMR, this function is independent of the tRNA boundary element. Contributes to appropriate cell cycle regulation of histone gene expression by recruiting RNA polymerase II to histone genes, and subsequent CDK1- and casein kinase II-dependent eviction from chromatin is required to promote transcriptional elongation. In Saccharomyces cerevisiae (strain ATCC 204508 / S288c) (Baker's yeast), this protein is ATPase histone chaperone YTA7.